A 375-amino-acid polypeptide reads, in one-letter code: Serpentine receptor class alpha-39 (375 aa).

The next 7 helical transmembrane spans lie at 17–37 (LFAI…LFII), 51–71 (LVFL…LTAW), 99–119 (IRGT…GILL), 138–158 (LGTI…FILL), 183–203 (VYVM…VHLV), 236–256 (TPLL…VSVF), and 275–295 (LFIM…ELWL).

It belongs to the nematode receptor-like protein sra family.

It is found in the membrane. The sequence is that of Serpentine receptor class alpha-39 (sra-39) from Caenorhabditis elegans.